Reading from the N-terminus, the 261-residue chain is Mite allergen Der p 3 (261 aa).

An N-terminal signal peptide occupies residues 1–18; it reads MIIYNILIVLLLAINTLA. Positions 19–29 are excised as a propeptide; that stretch reads NPILPASPNAT. Residues 30-260 enclose the Peptidase S1 domain; that stretch reads IVGGEKALAG…FIDWIESKRS (231 aa). A disulfide bridge links cysteine 54 with cysteine 70. Residues histidine 69 and aspartate 114 each act as charge relay system in the active site. Cystine bridges form between cysteine 181–cysteine 198 and cysteine 210–cysteine 236. The Charge relay system role is filled by serine 214.

This sequence belongs to the peptidase S1 family.

It localises to the secreted. This Dermatophagoides pteronyssinus (European house dust mite) protein is Mite allergen Der p 3 (DERP3).